Here is a 299-residue protein sequence, read N- to C-terminus: Ectoine dioxygenase (299 aa).

The segment at 1–40 (MTTTTTNVTDLYPTRGATEVATPRQDPVVWGSPDAPGPVS) is disordered. Residue Q133 coordinates L-ectoine. K139 contacts 2-oxoglutarate. Residues H150, D152, and H251 each coordinate Fe cation.

It belongs to the PhyH family. EctD subfamily. Homodimer. Fe(2+) serves as cofactor.

The enzyme catalyses L-ectoine + 2-oxoglutarate + O2 = 5-hydroxyectoine + succinate + CO2. Functionally, involved in the biosynthesis of 5-hydroxyectoine, called compatible solute, which helps organisms to survive extreme osmotic stress by acting as a highly soluble organic osmolyte. Catalyzes the 2-oxoglutarate-dependent selective hydroxylation of L-ectoine to yield (4S,5S)-5-hydroxyectoine. In Streptomyces coelicolor (strain ATCC BAA-471 / A3(2) / M145), this protein is Ectoine dioxygenase.